Here is a 436-residue protein sequence, read N- to C-terminus: Acrosin (436 aa).

The signal sequence occupies residues 1 to 19 (MVEMLPTVAVLVLAVSVVA). Asn-22 carries N-linked (GlcNAc...) asparagine glycosylation. 6 disulfides stabilise this stretch: Cys-25–Cys-155, Cys-29–Cys-163, Cys-74–Cys-90, Cys-178–Cys-247, Cys-210–Cys-226, and Cys-237–Cys-267. The region spanning 43-291 (IVSGQSAQLG…YLDWIASKIG (249 aa)) is the Peptidase S1 domain. Active-site charge relay system residues include His-89 and Asp-143. Asn-211 is a glycosylation site (N-linked (GlcNAc...) asparagine). Catalysis depends on Ser-241, which acts as the Charge relay system. Positions 346–436 (PSSTQTSSSL…NKPSEPFLHS (91 aa)) are cleaved as a propeptide — pro-rich.

The protein belongs to the peptidase S1 family. In terms of assembly, heavy chain (catalytic) and a light chain linked by two disulfide bonds. Forms a heterodimer with SERPINA5.

It catalyses the reaction Preferential cleavage: Arg-|-Xaa, Lys-|-Xaa.. Inhibited by SERPINA5. Functionally, acrosin is the major protease of mammalian spermatozoa. It is a serine protease of trypsin-like cleavage specificity, it is synthesized in a zymogen form, proacrosin and stored in the acrosome. This chain is Acrosin (Acr), found in Mus musculus (Mouse).